Here is a 141-residue protein sequence, read N- to C-terminus: Galactose-6-phosphate isomerase subunit LacA (141 aa).

This sequence belongs to the LacAB/RpiB family. Heteromultimeric protein consisting of LacA and LacB.

It catalyses the reaction aldehydo-D-galactose 6-phosphate = keto-D-tagatose 6-phosphate. The protein operates within carbohydrate metabolism; D-galactose 6-phosphate degradation; D-tagatose 6-phosphate from D-galactose 6-phosphate: step 1/1. This Streptococcus pneumoniae serotype 4 (strain ATCC BAA-334 / TIGR4) protein is Galactose-6-phosphate isomerase subunit LacA.